We begin with the raw amino-acid sequence, 270 residues long: 3-phenylpropionate-dihydrodiol/cinnamic acid-dihydrodiol dehydrogenase (270 aa).

An NAD(+)-binding site is contributed by 10–34; it reads FITGGGSGLGLALVERFIEEGAQVA. Position 143 (S143) interacts with substrate. Y156 (proton acceptor) is an active-site residue.

Belongs to the short-chain dehydrogenases/reductases (SDR) family.

It carries out the reaction 3-(cis-5,6-dihydroxycyclohexa-1,3-dien-1-yl)propanoate + NAD(+) = 3-(2,3-dihydroxyphenyl)propanoate + NADH + H(+). The catalysed reaction is (2E)-3-(cis-5,6-dihydroxycyclohexa-1,3-dien-1-yl)prop-2-enoate + NAD(+) = (2E)-3-(2,3-dihydroxyphenyl)prop-2-enoate + NADH + H(+). It participates in aromatic compound metabolism; 3-phenylpropanoate degradation. Converts 3-phenylpropionate-dihydrodiol (PP-dihydrodiol) and cinnamic acid-dihydrodiol (CI-dihydrodiol) into 3-(2,3-dihydroxylphenyl)propanoic acid (DHPP) and 2,3-dihydroxicinnamic acid (DHCI), respectively. The sequence is that of 3-phenylpropionate-dihydrodiol/cinnamic acid-dihydrodiol dehydrogenase from Shigella flexneri serotype 5b (strain 8401).